The chain runs to 287 residues: Acetylglutamate kinase (287 aa).

Residues 65-66, arginine 87, and asparagine 181 contribute to the substrate site; that span reads GG.

Belongs to the acetylglutamate kinase family. ArgB subfamily.

It localises to the cytoplasm. It catalyses the reaction N-acetyl-L-glutamate + ATP = N-acetyl-L-glutamyl 5-phosphate + ADP. The protein operates within amino-acid biosynthesis; L-arginine biosynthesis; N(2)-acetyl-L-ornithine from L-glutamate: step 2/4. Its function is as follows. Catalyzes the ATP-dependent phosphorylation of N-acetyl-L-glutamate. This is Acetylglutamate kinase from Syntrophomonas wolfei subsp. wolfei (strain DSM 2245B / Goettingen).